Reading from the N-terminus, the 369-residue chain is Peptidyl-prolyl cis-trans isomerase D (369 aa).

The 169-residue stretch at Tyr-7–Glu-175 folds into the PPIase cyclophilin-type domain. TPR repeat units follow at residues Val-217 to Tyr-250, Leu-268 to Asp-301, and Thr-306 to Asp-339.

This sequence belongs to the cyclophilin-type PPIase family. PPIase D subfamily.

It localises to the cytoplasm. It catalyses the reaction [protein]-peptidylproline (omega=180) = [protein]-peptidylproline (omega=0). Its function is as follows. PPIases accelerate the folding of proteins. It catalyzes the cis-trans isomerization of proline imidic peptide bonds in oligopeptides. The polypeptide is Peptidyl-prolyl cis-trans isomerase D (CPR6) (Candida albicans (strain SC5314 / ATCC MYA-2876) (Yeast)).